The sequence spans 701 residues: Glycine--tRNA ligase beta subunit (701 aa).

It belongs to the class-II aminoacyl-tRNA synthetase family. As to quaternary structure, tetramer of two alpha and two beta subunits.

The protein resides in the cytoplasm. The enzyme catalyses tRNA(Gly) + glycine + ATP = glycyl-tRNA(Gly) + AMP + diphosphate. The polypeptide is Glycine--tRNA ligase beta subunit (Anaeromyxobacter dehalogenans (strain 2CP-C)).